The primary structure comprises 418 residues: NADH-quinone oxidoreductase subunit D (418 aa).

Belongs to the complex I 49 kDa subunit family. NDH-1 is composed of 14 different subunits. Subunits NuoB, C, D, E, F, and G constitute the peripheral sector of the complex.

Its subcellular location is the cell inner membrane. The catalysed reaction is a quinone + NADH + 5 H(+)(in) = a quinol + NAD(+) + 4 H(+)(out). Its function is as follows. NDH-1 shuttles electrons from NADH, via FMN and iron-sulfur (Fe-S) centers, to quinones in the respiratory chain. The immediate electron acceptor for the enzyme in this species is believed to be ubiquinone. Couples the redox reaction to proton translocation (for every two electrons transferred, four hydrogen ions are translocated across the cytoplasmic membrane), and thus conserves the redox energy in a proton gradient. This chain is NADH-quinone oxidoreductase subunit D, found in Bordetella pertussis (strain Tohama I / ATCC BAA-589 / NCTC 13251).